The primary structure comprises 446 residues: tRNA modification GTPase MnmE (446 aa).

Residues Arg-22, Glu-80, and Lys-119 each contribute to the (6S)-5-formyl-5,6,7,8-tetrahydrofolate site. Positions 215–370 constitute a TrmE-type G domain; it reads GLSLVIAGRP…LKKVIKQVVG (156 aa). Asn-225 provides a ligand contact to K(+). Residues 225–230, 244–250, and 269–272 each bind GTP; these read NAGKST, TEIAGTT, and DTAG. Ser-229 contacts Mg(2+). K(+) is bound by residues Thr-244, Ile-246, and Thr-249. Thr-250 is a binding site for Mg(2+). Position 446 (Lys-446) interacts with (6S)-5-formyl-5,6,7,8-tetrahydrofolate.

The protein belongs to the TRAFAC class TrmE-Era-EngA-EngB-Septin-like GTPase superfamily. TrmE GTPase family. In terms of assembly, homodimer. Heterotetramer of two MnmE and two MnmG subunits. Requires K(+) as cofactor.

The protein localises to the cytoplasm. Exhibits a very high intrinsic GTPase hydrolysis rate. Involved in the addition of a carboxymethylaminomethyl (cmnm) group at the wobble position (U34) of certain tRNAs, forming tRNA-cmnm(5)s(2)U34. This Legionella pneumophila (strain Corby) protein is tRNA modification GTPase MnmE.